We begin with the raw amino-acid sequence, 519 residues long: NADH-quinone oxidoreductase subunit N (519 aa).

14 helical membrane-spanning segments follow: residues 22-42, 53-73, 87-107, 141-161, 163-183, 198-218, 242-262, 287-307, 310-330, 336-356, 363-383, 406-426, 442-461, and 483-503; these read LLPM…EAFV, VLAL…TGLP, PTLF…LLIA, TEVF…PAAN, LITA…LAGM, YFLL…LVYG, IIVG…GVPF, VAAF…LAWD, PVIW…GITQ, LLAY…AATT, VLFY…IVIL, LVAG…PTSG, AGPL…YYYL, and GALA…LGIV.

It belongs to the complex I subunit 2 family. As to quaternary structure, NDH-1 is composed of 14 different subunits. Subunits NuoA, H, J, K, L, M, N constitute the membrane sector of the complex.

The protein localises to the cell membrane. It carries out the reaction a quinone + NADH + 5 H(+)(in) = a quinol + NAD(+) + 4 H(+)(out). Its function is as follows. NDH-1 shuttles electrons from NADH, via FMN and iron-sulfur (Fe-S) centers, to quinones in the respiratory chain. The immediate electron acceptor for the enzyme in this species is believed to be a menaquinone. Couples the redox reaction to proton translocation (for every two electrons transferred, four hydrogen ions are translocated across the cytoplasmic membrane), and thus conserves the redox energy in a proton gradient. This chain is NADH-quinone oxidoreductase subunit N, found in Acidothermus cellulolyticus (strain ATCC 43068 / DSM 8971 / 11B).